Consider the following 457-residue polypeptide: V-type ATP synthase beta chain (457 aa).

It belongs to the ATPase alpha/beta chains family.

In terms of biological role, produces ATP from ADP in the presence of a proton gradient across the membrane. The V-type beta chain is a regulatory subunit. This chain is V-type ATP synthase beta chain, found in Clostridioides difficile (strain 630) (Peptoclostridium difficile).